The chain runs to 74 residues: UPF0352 protein PM1884 (74 aa).

The protein belongs to the UPF0352 family.

This chain is UPF0352 protein PM1884, found in Pasteurella multocida (strain Pm70).